The chain runs to 330 residues: D-alanine--D-alanine ligase (330 aa).

Residues 122-323 form the ATP-grasp domain; it reads NRFLSGFGIR…MKEVLCTIIR (202 aa). 151–206 serves as a coordination point for ATP; the sequence is IARMGLPLFVKPNVGGSSIATTKVVEAAQLLPAIEQAFSEGEEVMIERLICGTEVT. 3 residues coordinate Mg(2+): aspartate 277, glutamate 290, and asparagine 292.

The protein belongs to the D-alanine--D-alanine ligase family. It depends on Mg(2+) as a cofactor. The cofactor is Mn(2+).

It is found in the cytoplasm. It catalyses the reaction 2 D-alanine + ATP = D-alanyl-D-alanine + ADP + phosphate + H(+). It functions in the pathway cell wall biogenesis; peptidoglycan biosynthesis. Its function is as follows. Cell wall formation. The chain is D-alanine--D-alanine ligase from Porphyromonas gingivalis (strain ATCC BAA-308 / W83).